The primary structure comprises 938 residues: Isoleucine--tRNA ligase (938 aa).

The 'HIGH' region motif lies at 58–68 (PYANGNIHLGH). Position 562 (glutamate 562) interacts with L-isoleucyl-5'-AMP. Positions 603 to 607 (KMSKS) match the 'KMSKS' region motif. Lysine 606 contributes to the ATP binding site. Zn(2+) contacts are provided by cysteine 901, cysteine 904, cysteine 921, and cysteine 924.

The protein belongs to the class-I aminoacyl-tRNA synthetase family. IleS type 1 subfamily. In terms of assembly, monomer. Requires Zn(2+) as cofactor.

The protein resides in the cytoplasm. The enzyme catalyses tRNA(Ile) + L-isoleucine + ATP = L-isoleucyl-tRNA(Ile) + AMP + diphosphate. Functionally, catalyzes the attachment of isoleucine to tRNA(Ile). As IleRS can inadvertently accommodate and process structurally similar amino acids such as valine, to avoid such errors it has two additional distinct tRNA(Ile)-dependent editing activities. One activity is designated as 'pretransfer' editing and involves the hydrolysis of activated Val-AMP. The other activity is designated 'posttransfer' editing and involves deacylation of mischarged Val-tRNA(Ile). The polypeptide is Isoleucine--tRNA ligase (Glaesserella parasuis serovar 5 (strain SH0165) (Haemophilus parasuis)).